We begin with the raw amino-acid sequence, 92 residues long: Small ribosomal subunit protein uS17 (92 aa).

It belongs to the universal ribosomal protein uS17 family. In terms of assembly, part of the 30S ribosomal subunit.

One of the primary rRNA binding proteins, it binds specifically to the 5'-end of 16S ribosomal RNA. The sequence is that of Small ribosomal subunit protein uS17 from Mycoplasma mobile (strain ATCC 43663 / 163K / NCTC 11711) (Mesomycoplasma mobile).